A 38-amino-acid polypeptide reads, in one-letter code: Large ribosomal subunit protein bL36 (38 aa).

This sequence belongs to the bacterial ribosomal protein bL36 family.

The protein is Large ribosomal subunit protein bL36 of Synechocystis sp. (strain ATCC 27184 / PCC 6803 / Kazusa).